Here is a 315-residue protein sequence, read N- to C-terminus: Histone-lysine N-methyltransferase SETMAR (315 aa).

A Pre-SET domain is found at 74–137; the sequence is PGCACIKTPC…HCRNRVVQSG (64 aa). Zn(2+)-binding residues include C76, C78, C83, C88, C90, C119, C123, C125, and C129. The region spanning 140–264 is the SET domain; it reads FLLQVFQTEK…PGEELSYDYS (125 aa). Residues 150–152, Y193, R221, and 224–225 each bind S-adenosyl-L-methionine; these read KGW and NH. The Zn(2+) site is built by C227, C288, C290, and C295. Residues 284–300 enclose the Post-SET domain; that stretch reads PRKPCYCGAQSCATFLP.

It belongs to the class V-like SAM-binding methyltransferase superfamily.

It localises to the nucleus. It is found in the chromosome. It catalyses the reaction L-lysyl(36)-[histone H3] + 2 S-adenosyl-L-methionine = N(6),N(6)-dimethyl-L-lysyl(36)-[histone H3] + 2 S-adenosyl-L-homocysteine + 2 H(+). In terms of biological role, histone methyltransferase that methylates 'Lys-4' and 'Lys-36' of histone H3, 2 specific tags for epigenetic transcriptional activation. Specifically mediates dimethylation of H3 'Lys-36'. This chain is Histone-lysine N-methyltransferase SETMAR, found in Rattus norvegicus (Rat).